Reading from the N-terminus, the 240-residue chain is Octanoyltransferase (240 aa).

Residues 49–233 form the BPL/LPL catalytic domain; that stretch reads GEAPELVWLL…AFESVFGATR (185 aa). Residues 87 to 94, 162 to 164, and 175 to 177 each bind substrate; these read RGGQVTYH, AIG, and GIA. Catalysis depends on Cys-193, which acts as the Acyl-thioester intermediate.

The protein belongs to the LipB family.

The protein localises to the cytoplasm. The catalysed reaction is octanoyl-[ACP] + L-lysyl-[protein] = N(6)-octanoyl-L-lysyl-[protein] + holo-[ACP] + H(+). It participates in protein modification; protein lipoylation via endogenous pathway; protein N(6)-(lipoyl)lysine from octanoyl-[acyl-carrier-protein]: step 1/2. Its function is as follows. Catalyzes the transfer of endogenously produced octanoic acid from octanoyl-acyl-carrier-protein onto the lipoyl domains of lipoate-dependent enzymes. Lipoyl-ACP can also act as a substrate although octanoyl-ACP is likely to be the physiological substrate. This chain is Octanoyltransferase, found in Bradyrhizobium sp. (strain BTAi1 / ATCC BAA-1182).